The chain runs to 140 residues: Nucleoside diphosphate kinase (140 aa).

ATP-binding residues include lysine 11, phenylalanine 59, arginine 87, threonine 93, arginine 104, and asparagine 114. Histidine 117 serves as the catalytic Pros-phosphohistidine intermediate.

The protein belongs to the NDK family. As to quaternary structure, homotetramer. Mg(2+) serves as cofactor.

The protein resides in the cytoplasm. The catalysed reaction is a 2'-deoxyribonucleoside 5'-diphosphate + ATP = a 2'-deoxyribonucleoside 5'-triphosphate + ADP. It catalyses the reaction a ribonucleoside 5'-diphosphate + ATP = a ribonucleoside 5'-triphosphate + ADP. Major role in the synthesis of nucleoside triphosphates other than ATP. The ATP gamma phosphate is transferred to the NDP beta phosphate via a ping-pong mechanism, using a phosphorylated active-site intermediate. This is Nucleoside diphosphate kinase from Francisella tularensis subsp. mediasiatica (strain FSC147).